The following is a 394-amino-acid chain: Phosphoglycerate kinase (394 aa).

Residues 21–23, Arg36, 59–62, Arg118, and Arg151 each bind substrate; these read DFN and HLGR. The residue at position 183 (Ser183) is a Phosphoserine. Lys201 is a binding site for ATP. The residue at position 299 (Thr299) is a Phosphothreonine. ATP contacts are provided by residues Asn316, Glu323, and 350–353; that span reads GGDS.

Belongs to the phosphoglycerate kinase family. Monomer.

It localises to the cytoplasm. It catalyses the reaction (2R)-3-phosphoglycerate + ATP = (2R)-3-phospho-glyceroyl phosphate + ADP. Its pathway is carbohydrate degradation; glycolysis; pyruvate from D-glyceraldehyde 3-phosphate: step 2/5. This is Phosphoglycerate kinase from Geobacillus stearothermophilus (Bacillus stearothermophilus).